The chain runs to 346 residues: Annexin A1 (346 aa).

S5 carries the post-translational modification Phosphoserine; by TRPM7. Q19 participates in a covalent cross-link: Isoglutamyl lysine isopeptide (Gln-Lys) (interchain with K-?). Y21 is modified (phosphotyrosine; by EGFR). S34 and S37 each carry phosphoserine. Annexin repeat units follow at residues F42–K113, T114–K185, D197–K269, and S273–G344. The residue at position 58 (K58) is an N6-acetyllysine. Residues G59, V60, E62, K97, L100, E105, M127, G129, G131, T132, and E134 each coordinate Ca(2+). A Phosphothreonine modification is found at T136. Residues D171, G210, and R213 each contribute to the Ca(2+) site. K214 participates in a covalent cross-link: Glycyl lysine isopeptide (Lys-Gly) (interchain with G-Cter in SUMO1); alternate. Residue K214 forms a Glycyl lysine isopeptide (Lys-Gly) (interchain with G-Cter in SUMO2); alternate linkage. 4 residues coordinate Ca(2+): G215, D253, E255, and M256. A Glycyl lysine isopeptide (Lys-Gly) (interchain with G-Cter in SUMO1) cross-link involves residue K257. Ca(2+) is bound by residues E261, M286, G288, and G290. N6-acetyllysine is present on K312. C324 and C343 are joined by a disulfide. Ca(2+)-binding residues include L328, E330, and T331. A Glycyl lysine isopeptide (Lys-Gly) (interchain with G-Cter in SUMO1) cross-link involves residue K332. Residue E336 coordinates Ca(2+).

Belongs to the annexin family. Homodimer; non-covalently linked. Homodimer; linked by transglutamylation. Homodimers linked by transglutamylation are observed in placenta, but not in other tissues. Interacts with S100A11. Heterotetramer, formed by two molecules each of S100A11 and ANXA1. Interacts with DYSF. Interacts with EGFR. Phosphorylated by protein kinase C, EGFR and TRPM7. Phosphorylated in response to EGF treatment. In terms of processing, sumoylated. Post-translationally, proteolytically cleaved by cathepsin CTSG to release the active N-terminal peptide Ac2-26.

Its subcellular location is the nucleus. The protein localises to the cytoplasm. It localises to the cell projection. The protein resides in the cilium. It is found in the basolateral cell membrane. Its subcellular location is the lateral cell membrane. The protein localises to the cell membrane. It localises to the apical cell membrane. The protein resides in the membrane. It is found in the early endosome. Its subcellular location is the cytoplasmic vesicle membrane. The protein localises to the endosome membrane. It localises to the secreted. The protein resides in the extracellular space. It is found in the extracellular exosome. Its subcellular location is the cytoplasmic vesicle. The protein localises to the secretory vesicle lumen. It localises to the phagocytic cup. Plays important roles in the innate immune response as effector of glucocorticoid-mediated responses and regulator of the inflammatory process. Has anti-inflammatory activity. Plays a role in glucocorticoid-mediated down-regulation of the early phase of the inflammatory response. Contributes to the adaptive immune response by enhancing signaling cascades that are triggered by T-cell activation, regulates differentiation and proliferation of activated T-cells. Promotes the differentiation of T-cells into Th1 cells and negatively regulates differentiation into Th2 cells. Has no effect on unstimulated T-cells. Negatively regulates hormone exocytosis via activation of the formyl peptide receptors and reorganization of the actin cytoskeleton. Has high affinity for Ca(2+) and can bind up to eight Ca(2+) ions. Displays Ca(2+)-dependent binding to phospholipid membranes. Plays a role in the formation of phagocytic cups and phagosomes. Plays a role in phagocytosis by mediating the Ca(2+)-dependent interaction between phagosomes and the actin cytoskeleton. Its function is as follows. Functions at least in part by activating the formyl peptide receptors and downstream signaling cascades. Promotes chemotaxis of granulocytes and monocytes via activation of the formyl peptide receptors. Promotes rearrangement of the actin cytoskeleton, cell polarization and cell migration. Promotes resolution of inflammation and wound healing. Acts via neutrophil N-formyl peptide receptors to enhance the release of CXCL2. This chain is Annexin A1 (ANXA1), found in Equus caballus (Horse).